Consider the following 414-residue polypeptide: MAITAIKGCNDILPEESGRWQYIEQAARRIFERNGFSEIRVPIMEKTELFCRSIGDTSDIVEKEMYTFTDKGENSVTLRPEGTAGVMRAYIEHKMHAQDPLAKLYYLGPMFRYERPQKGRYRQFHQIGAEVTGVTDPLVDAQVLNMLCAFFHEIGLDEPTLQINSLGCPDCRPAYRAALMEFLQGRLDRLCDDCKRRFTVNPLRTLDCKSAGCAEATKGAPAMLDHLCTACDDHFSSVKRYLDLTGSRYSINPRMVRGLDYYTRTTFELVTGLLGAQSAVAAGGRYDGLISQLGGPSIPGIGFAMGVERVALLLGERDFSRRPDLFIATMGAGQRDKAFCLLTKLQNQGIRVEMDYEGKSLKSQMRRADKLRARFSVVIGENELATGRASFKRMEDGVQNEAALEADDIVTLLA.

It belongs to the class-II aminoacyl-tRNA synthetase family. Homodimer.

The protein localises to the cytoplasm. It catalyses the reaction tRNA(His) + L-histidine + ATP = L-histidyl-tRNA(His) + AMP + diphosphate + H(+). The sequence is that of Histidine--tRNA ligase from Pelobacter propionicus (strain DSM 2379 / NBRC 103807 / OttBd1).